The following is a 299-amino-acid chain: Somaliensene A/B synthase (299 aa).

7 helical membrane-spanning segments follow: residues 32–49 (WTTL…AVHT), 56–72 (TAVA…LFVY), 110–132 (IAVR…ALLW), 153–171 (LYAG…EIVA), 177–194 (AWRW…LMSV), 222–241 (VFLC…FLMA), and 247–269 (WWIV…RVVL).

It belongs to the UbiA prenyltransferase family. It depends on Mg(2+) as a cofactor.

It localises to the cell membrane. It catalyses the reaction (2E,6E,10E,14E)-geranylfarnesyl diphosphate = somaliensene A + diphosphate. It carries out the reaction (2E,6E,10E,14E)-geranylfarnesyl diphosphate = (-)-somaliensene B + diphosphate. It participates in secondary metabolite biosynthesis; terpenoid biosynthesis. Its function is as follows. Sesterterpene cyclase, which converts geranylfarnesyl diphosphate (GFPP) into the terpenes somaliensene A and somaliensene B. The polypeptide is Somaliensene A/B synthase (Streptomyces somaliensis (strain ATCC 33201 / DSM 40738 / JCM 12659 / KCTC 9044 / NCTC 11332 / NRRL B-12077 / IP 733)).